Reading from the N-terminus, the 304-residue chain is Non-specific ribonucleoside hydrolase RihC (304 aa).

His233 is an active-site residue.

This sequence belongs to the IUNH family. RihC subfamily.

Its function is as follows. Hydrolyzes both purine and pyrimidine ribonucleosides with a broad-substrate specificity. The polypeptide is Non-specific ribonucleoside hydrolase RihC (Shigella boydii serotype 18 (strain CDC 3083-94 / BS512)).